Here is a 529-residue protein sequence, read N- to C-terminus: Glycerol kinase 5 (529 aa).

Positions 22 and 23 each coordinate ATP. Glycerol is bound by residues arginine 92, aspartate 269, and glutamine 270. The ATP site is built by threonine 291, glycine 334, and glycine 434.

The protein belongs to the FGGY kinase family.

The protein resides in the cytoplasm. It carries out the reaction glycerol + ATP = sn-glycerol 3-phosphate + ADP + H(+). It functions in the pathway polyol metabolism; glycerol degradation via glycerol kinase pathway; sn-glycerol 3-phosphate from glycerol: step 1/1. In terms of biological role, skin-specific kinase that plays a key role in glycerol metabolism, catalyzing its phosphorylation to produce sn-glycerol 3-phosphate. Involved in skin-specific regulation of sterol regulatory element-binding protein (SREBP) processing and lipid biosynthesis. The protein is Glycerol kinase 5 (gk5) of Danio rerio (Zebrafish).